Reading from the N-terminus, the 480-residue chain is Beta-glucosidase A (480 aa).

Residue Glu177 is the Proton donor of the active site. Residue Glu378 is the Nucleophile of the active site.

This sequence belongs to the glycosyl hydrolase 1 family.

The enzyme catalyses Hydrolysis of terminal, non-reducing beta-D-glucosyl residues with release of beta-D-glucose.. This is Beta-glucosidase A (bglA) from Enterobacter agglomerans (Erwinia herbicola).